The following is a 266-amino-acid chain: Proteasome subunit alpha type-1 (266 aa).

The segment at 235–266 is disordered; it reads DGFKTRPEDIPAVADNEEDDDELHEQPPDVEE. Residues 249 to 266 are compositionally biased toward acidic residues; it reads DNEEDDDELHEQPPDVEE.

It belongs to the peptidase T1A family. The 26S proteasome consists of a 20S proteasome core and two 19S regulatory subunits. The 20S proteasome core is composed of 28 subunits that are arranged in four stacked rings, resulting in a barrel-shaped structure. The two end rings are each formed by seven alpha subunits, and the two central rings are each formed by seven beta subunits. The catalytic chamber with the active sites is on the inside of the barrel.

It localises to the cytoplasm. The protein resides in the nucleus. Its function is as follows. The proteasome is a multicatalytic proteinase complex which is characterized by its ability to cleave peptides with Arg, Phe, Tyr, Leu, and Glu adjacent to the leaving group at neutral or slightly basic pH. The proteasome has an ATP-dependent proteolytic activity. This Trypanosoma brucei rhodesiense protein is Proteasome subunit alpha type-1.